Reading from the N-terminus, the 368-residue chain is Cyclic di-GMP phosphodiesterase TM_0186 (368 aa).

The region spanning threonine 2 to leucine 114 is the Response regulatory domain. Position 49 is a 4-aspartylphosphate (aspartate 49). Residues tyrosine 148–aspartate 345 form the HD-GYP domain. Residues glutamate 169, histidine 173, histidine 205, aspartate 206, histidine 234, histidine 260, histidine 261, and aspartate 289 each coordinate a divalent metal cation. Residues arginine 341–arginine 368 form a disordered region. Polar residues predominate over residues histidine 350–proline 360.

The catalysed reaction is 3',3'-c-di-GMP + 2 H2O = 2 GMP + 2 H(+). Its activity is regulated as follows. Can function in vivo with either divalent iron or manganese occupying di- and trimetal sites. Dimetal is necessary and sufficient to catalyze conversion of c-di-GMP to pGpG, but conversion of pGpG to GMP requires an occupied trimetal site. In terms of biological role, phosphodiesterase (PDE) that catalyzes the hydrolysis of cyclic diguanylate (c-di-GMP) to GMP. Hydrolyzes c-di-GMP to GMP in a two-step reaction, via the linear intermediate 5'-phosphoguanylyl(3'-&gt;5')guanosine (pGpG). This is Cyclic di-GMP phosphodiesterase TM_0186 from Thermotoga maritima (strain ATCC 43589 / DSM 3109 / JCM 10099 / NBRC 100826 / MSB8).